We begin with the raw amino-acid sequence, 510 residues long: Ribonuclease Y (510 aa).

A helical transmembrane segment spans residues 1-21 (MLIYILSGLGVLVGALLGYVV). A KH domain is found at 200–260 (TVSTIMLPND…LRREIAKRTI (61 aa)). The 94-residue stretch at 326–419 (VLNHSIEVAL…VAAADALSAA (94 aa)) folds into the HD domain.

It belongs to the RNase Y family.

The protein localises to the cell membrane. Its function is as follows. Endoribonuclease that initiates mRNA decay. In Thermosipho melanesiensis (strain DSM 12029 / CIP 104789 / BI429), this protein is Ribonuclease Y.